Reading from the N-terminus, the 415-residue chain is Dynein assembly factor with WD repeat domains 1 (415 aa).

WD repeat units lie at residues 90–129, 132–174, 175–214, 217–256, 259–298, 301–340, 343–384, and 386–415; these read AHILPLTNVAFNKSGSSFITGSYDRTCKVWDTASGEELHT, GHRN…HTFR, GHTAEIVCLVFNPQSTLIATGSMDTTAKLWDIQSGEEALT, GHAAEIISLSFNTTGDRLITGSFDHTVSVWEIPSGRRIHT, GHRGEISSAQFNWDCSLIATASMDKSCKLWDSLNGKCVAT, GHDDEVLDVTFDSTGQLVATASADGTARVYSASSRKCLAK, GHEG…QVLK, and HTDEIFSCAFNYEGNTIITGSKDNTCRIWR.

Belongs to the WD repeat WDR69 family.

It localises to the cytoplasm. The protein resides in the cytoskeleton. It is found in the flagellum basal body. The protein localises to the flagellum axoneme. Functionally, required for axonemal dynein assembly and ciliary motility in ciliated organs, including Kupffer's vesicle, during embryogenesis. Facilitates the onset of robust cilia motility during development. This chain is Dynein assembly factor with WD repeat domains 1 (daw1), found in Xenopus laevis (African clawed frog).